Reading from the N-terminus, the 200-residue chain is Large ribosomal subunit protein uL4 (200 aa).

Residues 38 to 72 (GRQGSKQQKTRSDVSGGGKRPWRQKGTGRARAGTI) form a disordered region.

Belongs to the universal ribosomal protein uL4 family. Part of the 50S ribosomal subunit.

In terms of biological role, one of the primary rRNA binding proteins, this protein initially binds near the 5'-end of the 23S rRNA. It is important during the early stages of 50S assembly. It makes multiple contacts with different domains of the 23S rRNA in the assembled 50S subunit and ribosome. Forms part of the polypeptide exit tunnel. This Pseudomonas fluorescens (strain ATCC BAA-477 / NRRL B-23932 / Pf-5) protein is Large ribosomal subunit protein uL4.